A 538-amino-acid polypeptide reads, in one-letter code: UNC93-like protein (538 aa).

Asn-45 carries N-linked (GlcNAc...) asparagine glycosylation. The next 5 helical transmembrane spans lie at 46 to 66 (ISII…TANL), 80 to 100 (SLSA…TLII), 105 to 125 (VKWT…FQLF), 128 to 148 (FYTL…MWAS), and 170 to 190 (AIIV…ELWG). An N-linked (GlcNAc...) asparagine glycan is attached at Asn-210. Transmembrane regions (helical) follow at residues 244-264 (IFEI…IIAF), 305-325 (LLIP…ADFT), 338-358 (IGFV…LFGS), 366-386 (TPII…ELFW), 394-414 (IIFY…QTQI), 435-455 (LWES…CTQM), and 457-477 (LYIL…VEIL).

Belongs to the unc-93 family.

Its subcellular location is the membrane. This chain is UNC93-like protein, found in Drosophila melanogaster (Fruit fly).